Consider the following 428-residue polypeptide: Histidinol dehydrogenase (428 aa).

The substrate site is built by S232, Q254, and H257. Zn(2+)-binding residues include Q254 and H257. Catalysis depends on proton acceptor residues E324 and H325. Substrate contacts are provided by H325, D358, E412, and H417. D358 is a Zn(2+) binding site. Position 417 (H417) interacts with Zn(2+).

The protein belongs to the histidinol dehydrogenase family. It depends on Zn(2+) as a cofactor.

The enzyme catalyses L-histidinol + 2 NAD(+) + H2O = L-histidine + 2 NADH + 3 H(+). It functions in the pathway amino-acid biosynthesis; L-histidine biosynthesis; L-histidine from 5-phospho-alpha-D-ribose 1-diphosphate: step 9/9. In terms of biological role, catalyzes the sequential NAD-dependent oxidations of L-histidinol to L-histidinaldehyde and then to L-histidine. This chain is Histidinol dehydrogenase, found in Thermotoga maritima (strain ATCC 43589 / DSM 3109 / JCM 10099 / NBRC 100826 / MSB8).